Here is a 572-residue protein sequence, read N- to C-terminus: Urease subunit alpha (572 aa).

A Urease domain is found at 134–572 (GGIDAHVHMI…VSLGQLYFFS (439 aa)). His139, His141, and Lys222 together coordinate Ni(2+). N6-carboxylysine is present on Lys222. Substrate is bound at residue His224. Residues His251 and His277 each contribute to the Ni(2+) site. His325 serves as the catalytic Proton donor. Position 365 (Asp365) interacts with Ni(2+).

It belongs to the metallo-dependent hydrolases superfamily. Urease alpha subunit family. As to quaternary structure, heterotrimer of UreA (gamma), UreB (beta) and UreC (alpha) subunits. Three heterotrimers associate to form the active enzyme. Requires Ni cation as cofactor. Post-translationally, carboxylation allows a single lysine to coordinate two nickel ions.

Its subcellular location is the cytoplasm. It carries out the reaction urea + 2 H2O + H(+) = hydrogencarbonate + 2 NH4(+). It functions in the pathway nitrogen metabolism; urea degradation; CO(2) and NH(3) from urea (urease route): step 1/1. This Laribacter hongkongensis (strain HLHK9) protein is Urease subunit alpha.